Consider the following 328-residue polypeptide: GTP 3',8-cyclase (328 aa).

The region spanning 1-229 (MNQVDYLRIS…DAQVRGAGPA (229 aa)) is the Radical SAM core domain. Arg-8 lines the GTP pocket. [4Fe-4S] cluster-binding residues include Cys-15 and Cys-19. Tyr-21 is a binding site for S-adenosyl-L-methionine. A [4Fe-4S] cluster-binding site is contributed by Cys-22. Arg-60 contributes to the GTP binding site. Gly-64 lines the S-adenosyl-L-methionine pocket. Thr-91 lines the GTP pocket. S-adenosyl-L-methionine is bound at residue Ser-115. Lys-155 contributes to the GTP binding site. Met-189 lines the S-adenosyl-L-methionine pocket. Residues Cys-252 and Cys-255 each coordinate [4Fe-4S] cluster. 257–259 (RMR) is a GTP binding site. Cys-269 lines the [4Fe-4S] cluster pocket.

Belongs to the radical SAM superfamily. MoaA family. Monomer and homodimer. The cofactor is [4Fe-4S] cluster.

The catalysed reaction is GTP + AH2 + S-adenosyl-L-methionine = (8S)-3',8-cyclo-7,8-dihydroguanosine 5'-triphosphate + 5'-deoxyadenosine + L-methionine + A + H(+). It participates in cofactor biosynthesis; molybdopterin biosynthesis. Catalyzes the cyclization of GTP to (8S)-3',8-cyclo-7,8-dihydroguanosine 5'-triphosphate. In Nostoc sp. (strain PCC 7120 / SAG 25.82 / UTEX 2576), this protein is GTP 3',8-cyclase.